Consider the following 261-residue polypeptide: Carbonic anhydrase 1 (261 aa).

A2 is modified (N-acetylalanine). Positions 4–261 constitute an Alpha-carbonic anhydrase domain; sequence PDWGYDGENG…LKGRTVKASF (258 aa). Residues 22 to 41 are disordered; it reads PIANGNNQSPIDIKTSETKR. Residue H65 is the Proton donor/acceptor of the active site. Residues H95, H97, and H120 each contribute to the Zn(2+) site. Substrate-binding positions include T200 and 200 to 201; that span reads TH.

It belongs to the alpha-carbonic anhydrase family. Zn(2+) is required as a cofactor.

Its subcellular location is the cytoplasm. The catalysed reaction is hydrogencarbonate + H(+) = CO2 + H2O. The enzyme catalyses urea = cyanamide + H2O. Its activity is regulated as follows. Inhibited by acetazolamide. Catalyzes the reversible hydration of carbon dioxide. Can hydrate cyanamide to urea. This Ovis aries (Sheep) protein is Carbonic anhydrase 1 (CA1).